The primary structure comprises 206 residues: Triafestin-2 (206 aa).

The signal sequence occupies residues 1 to 18; the sequence is MKTILAVIFFGILAFAFA. 3 N-linked (GlcNAc...) asparagine glycosylation sites follow: Asn-25, Asn-55, and Asn-178.

The protein belongs to the calycin superfamily. Triabin family. In terms of assembly, interacts with host coagulation factor XII (F12) (inactive and activated) (via amino acids 1-77). Interacts with host high molecular weight kininogen (KNG1) (via amino acids 402-532). As to expression, salivary gland (at protein level).

It localises to the secreted. Its activity is regulated as follows. Zn(2+) modulates binding to host coagulation factor XII (F12) and high molecular weight kininogen (KNG1). Functionally, suppresses activation of the host plasma kallikrein-kinin system, leading to inhibition of the intrinsic coagulation pathway. Blocks host coagulation factor XII (F12) and prekallikrein (KLKB1) reciprocal activation without affecting their amidolytic activities. Blocks binding of host F12 and high molecular weight kininogen (KNG1) to negatively charged surfaces. Attenuates generation of bradykinin by interfering with activation of host kallikrein-kinin system. This Triatoma infestans (Assassin bug) protein is Triafestin-2.